The chain runs to 624 residues: Chaperone protein HtpG (624 aa).

The a; substrate-binding stretch occupies residues Met-1 to Arg-336. Residues Glu-337–Lys-552 form a b region. A c region spans residues Leu-553–Ser-624.

It belongs to the heat shock protein 90 family. In terms of assembly, homodimer. UMPylated on a histidine residue by YdiU under ATP-limited conditions.

The protein localises to the cytoplasm. With respect to regulation, UMPylation of the chaperone by YdiU negatively regulates its activity, facilitating Salmonella survival under ATP-limited conditions. Functionally, molecular chaperone. Has ATPase activity. In Salmonella typhimurium (strain LT2 / SGSC1412 / ATCC 700720), this protein is Chaperone protein HtpG.